Reading from the N-terminus, the 257-residue chain is 4-hydroxy-tetrahydrodipicolinate reductase (257 aa).

NAD(+) contacts are provided by residues 7–12 (GAAGRM), aspartate 32, 91–93 (GTT), and 115–118 (SPNF). Histidine 147 acts as the Proton donor/acceptor in catalysis. Histidine 148 lines the (S)-2,3,4,5-tetrahydrodipicolinate pocket. The Proton donor role is filled by lysine 151. (S)-2,3,4,5-tetrahydrodipicolinate is bound at residue 157-158 (GT).

Belongs to the DapB family.

It localises to the cytoplasm. It carries out the reaction (S)-2,3,4,5-tetrahydrodipicolinate + NAD(+) + H2O = (2S,4S)-4-hydroxy-2,3,4,5-tetrahydrodipicolinate + NADH + H(+). The enzyme catalyses (S)-2,3,4,5-tetrahydrodipicolinate + NADP(+) + H2O = (2S,4S)-4-hydroxy-2,3,4,5-tetrahydrodipicolinate + NADPH + H(+). It functions in the pathway amino-acid biosynthesis; L-lysine biosynthesis via DAP pathway; (S)-tetrahydrodipicolinate from L-aspartate: step 4/4. Catalyzes the conversion of 4-hydroxy-tetrahydrodipicolinate (HTPA) to tetrahydrodipicolinate. This Archaeoglobus fulgidus (strain ATCC 49558 / DSM 4304 / JCM 9628 / NBRC 100126 / VC-16) protein is 4-hydroxy-tetrahydrodipicolinate reductase.